The chain runs to 188 residues: MSTMFADTILIVFISICTALLAEGITWVLVYRTDKYKRLKAEVEKQSKKLEKKKETITESAGRQQKKKIERQEEKLKNNNRDLSMVRMKSMFAIGFCFTALMGMFNSIFDGRVVAKLPFVPLSYIQGLSHRNLLGEDYTDCSFIFLYILCTMSIRQNIQKMLGLAPSRAATKQAGGFLGPPPQAAKFS.

The Lumenal portion of the chain corresponds to 1 to 4 (MSTM). The chain crosses the membrane as a helical span at residues 5–32 (FADTILIVFISICTALLAEGITWVLVYR). Residues 32–89 (RTDKYKRLKAEVEKQSKKLEKKKETITESAGRQQKKKIERQEEKLKNNNRDLSMVRMK) adopt a coiled-coil conformation. Residues 33–86 (TDKYKRLKAEVEKQSKKLEKKKETITESAGRQQKKKIERQEEKLKNNNRDLSMV) are Cytoplasmic-facing. A helical membrane pass occupies residues 87-106 (RMKSMFAIGFCFTALMGMFN). The Lumenal portion of the chain corresponds to 107–120 (SIFDGRVVAKLPFV). An intramembrane segment occupies 121-130 (PLSYIQGLSH). Over 131 to 140 (RNLLGEDYTD) the chain is Lumenal. The chain crosses the membrane as a helical span at residues 141-162 (CSFIFLYILCTMSIRQNIQKML). Residues 163–188 (GLAPSRAATKQAGGFLGPPPQAAKFS) are Cytoplasmic-facing.

It belongs to the TMCO1 family. Homodimer and homotetramer. Component of the multi-pass translocon (MPT) complex.

It is found in the endoplasmic reticulum membrane. The protein resides in the golgi apparatus membrane. Its function is as follows. Calcium-selective channel required to prevent calcium stores from overfilling, thereby playing a key role in calcium homeostasis. In response to endoplasmic reticulum (ER) overloading, assembles into a homotetramer, forming a functional calcium-selective channel, regulating the calcium content in endoplasmic reticulum store. Component of the multi-pass translocon (MPT) complex that mediates insertion of multi-pass membrane proteins into the lipid bilayer of membranes. The chain is Calcium load-activated calcium channel from Danio rerio (Zebrafish).